Consider the following 343-residue polypeptide: Pentatricopeptide repeat-containing protein At1g06270 (343 aa).

6 PPR repeats span residues 98–133, 134–169, 170–204, 205–240, 241–275, and 276–310; these read PKIV…GCLP, NPQT…GYSP, DTGT…GCIP, DVES…GISP, RKGM…DYPV, and EFES…GFIP.

This sequence belongs to the PPR family. P subfamily.

The sequence is that of Pentatricopeptide repeat-containing protein At1g06270 from Arabidopsis thaliana (Mouse-ear cress).